The following is a 145-amino-acid chain: Venom protein 30.1 (145 aa).

A signal peptide spans 1–18; sequence MIIVKLFTCLLMVSSVLT.

Contains 5 disulfide bonds. As to expression, expressed by the venom gland.

It localises to the secreted. The sequence is that of Venom protein 30.1 from Lychas mucronatus (Chinese swimming scorpion).